Consider the following 210-residue polypeptide: Pyridoxine/pyridoxamine 5'-phosphate oxidase (210 aa).

Substrate contacts are provided by residues 7-10 (REDY) and lysine 65. Residues 60–65 (RMVLLK), 75–76 (FT), arginine 81, lysine 82, and glutamine 104 contribute to the FMN site. 3 residues coordinate substrate: tyrosine 122, arginine 126, and serine 130. Residues 139–140 (QS) and tryptophan 183 each bind FMN. Position 189–191 (189–191 (RLH)) interacts with substrate. Residue arginine 193 coordinates FMN.

Belongs to the pyridoxamine 5'-phosphate oxidase family. In terms of assembly, homodimer. FMN serves as cofactor.

It catalyses the reaction pyridoxamine 5'-phosphate + O2 + H2O = pyridoxal 5'-phosphate + H2O2 + NH4(+). It carries out the reaction pyridoxine 5'-phosphate + O2 = pyridoxal 5'-phosphate + H2O2. It participates in cofactor metabolism; pyridoxal 5'-phosphate salvage; pyridoxal 5'-phosphate from pyridoxamine 5'-phosphate: step 1/1. It functions in the pathway cofactor metabolism; pyridoxal 5'-phosphate salvage; pyridoxal 5'-phosphate from pyridoxine 5'-phosphate: step 1/1. Functionally, catalyzes the oxidation of either pyridoxine 5'-phosphate (PNP) or pyridoxamine 5'-phosphate (PMP) into pyridoxal 5'-phosphate (PLP). The sequence is that of Pyridoxine/pyridoxamine 5'-phosphate oxidase from Neisseria meningitidis serogroup C (strain 053442).